The following is a 911-amino-acid chain: Alpha-actinin-4 (911 aa).

The tract at residues Met-1 to Ser-269 is actin-binding. Residues Gln-12–Gly-26 are interaction with VCL. The tract at residues Gln-12–Tyr-31 is disordered. The span at Ser-16–Gly-29 shows a compositional bias: gly residues. A Phosphotyrosine modification is found at Tyr-31. The interval Arg-40–Asn-61 is interaction with VCL. 2 consecutive Calponin-homology (CH) domains span residues Lys-50–Ala-154 and Thr-163–Ser-269. The LXXLL motif signature appears at Leu-84–Leu-88. The tract at residues Lys-108 to Leu-126 is interaction with VCL. N6-acetyllysine is present on Lys-114. The polyphosphoinositide (PIP2)-binding stretch occupies residues Thr-177–Trp-192. Residue Lys-214 is modified to N6-acetyllysine. Thr-249 carries the post-translational modification Phosphothreonine. Spectrin repeat units follow at residues His-293–Asn-403, His-413–Lys-518, Gln-528–Glu-639, and His-649–Asn-752. Residues Lys-592 and Lys-625 each carry the N6-acetyllysine modification. Ser-696 carries the post-translational modification Phosphoserine. The segment at Trp-736–Leu-911 is mediates interaction with MICALL2. 2 EF-hand domains span residues Glu-765–Asp-800 and Gln-806–Asp-841. Asp-778 is a binding site for Ca(2+). Lys-779 carries the N6-acetyllysine modification. Residues Asp-780 and Glu-789 each contribute to the Ca(2+) site. An N6-acetyllysine modification is found at Lys-859. A Phosphoserine modification is found at Ser-909.

The protein belongs to the alpha-actinin family. Homodimer; antiparallel. Interacts with MAGI1. Interacts with MICALL2 (preferentially in opened conformation); stimulated by RAB13 activation. Identified in a IGF2BP1-dependent mRNP granule complex containing untranslated mRNAs. Component of the CART complex, at least composed of ACTN4, HGS/HRS, MYO5B and TRIM3. Binds TRIM3 at the N-terminus. Interacts with PDLIM2. Identified in a complex with CASK, IQGAP1, MAGI2, NPHS1, SPTAN1 and SPTBN1. Interacts with PPARG and RARA. Binds to VCL; this interaction triggers VCL conformational changes. Interacts with SEPTIN14. Interacts with IGSF8. As to expression, expressed in the foot process layer of podocytes in the kidney glomerulus but not in tubules (at protein level).

It localises to the nucleus. It is found in the cytoplasm. The protein resides in the cell junction. The protein localises to the cytoskeleton. Its subcellular location is the stress fiber. It localises to the perinuclear region. F-actin cross-linking protein which is thought to anchor actin to a variety of intracellular structures. This is a bundling protein. Probably involved in vesicular trafficking via its association with the CART complex. The CART complex is necessary for efficient transferrin receptor recycling but not for EGFR degradation. Involved in tight junction assembly in epithelial cells probably through interaction with MICALL2. Links MICALL2 to the actin cytoskeleton and recruits it to the tight junctions. May also function as a transcriptional coactivator, stimulating transcription mediated by the nuclear hormone receptors PPARG and RARA. Association with IGSF8 regulates the immune synapse formation and is required for efficient T-cell activation. The protein is Alpha-actinin-4 of Rattus norvegicus (Rat).